Here is a 250-residue protein sequence, read N- to C-terminus: Cruxrhodopsin-3 (250 aa).

The Extracellular segment spans residues 1 to 9 (MPAPEGEAI). Residues 10–27 (WLWLGTAGMFLGMLYFIA) form a helical membrane-spanning segment. At 28–41 (RGWGETDSRRQKFY) the chain is on the cytoplasmic side. A helical membrane pass occupies residues 42–60 (IATILITAIAFVNYLAMAL). The Extracellular portion of the chain corresponds to 61–77 (GFGLTIVEIAGEQRPIY). A helical membrane pass occupies residues 78-94 (WARYSDWLFTTPLLLYD). Residues 95–105 (LGLLAGADRNT) are Cytoplasmic-facing. The chain crosses the membrane as a helical span at residues 106 to 125 (ISSLVSLDVLMIGTGLVATL). Residues 126 to 138 (SAGSGVLSAGAER) lie on the Extracellular side of the membrane. A helical membrane pass occupies residues 139-158 (LVWWGISTAFLLVLLYFLFS). Residues 159–176 (SLSGRVADLPSDTRSTFK) are Cytoplasmic-facing. Residues 177 to 195 (TLRNLVTVVWLVYPVWWLV) form a helical membrane-spanning segment. At 196–207 (GTEGIGLVGIGI) the chain is on the extracellular side. Residues 208–227 (ETAGFMVIDLVAKVGFGIIL) form a helical membrane-spanning segment. Position 220 is an N6-(retinylidene)lysine (Lys220). The Cytoplasmic portion of the chain corresponds to 228–250 (LRSHGVLDGAAETTGAGATATAD).

It belongs to the archaeal/bacterial/fungal opsin family. As to quaternary structure, homotrimer. Binds bacterioruberin in the crevice between neighboring subunits.

The protein resides in the cell membrane. In terms of biological role, light-driven proton pump. This is Cruxrhodopsin-3 (cop3) from Haloarcula vallismortis (Halobacterium vallismortis).